Here is a 556-residue protein sequence, read N- to C-terminus: 2-succinyl-5-enolpyruvyl-6-hydroxy-3-cyclohexene-1-carboxylate synthase (556 aa).

This sequence belongs to the TPP enzyme family. MenD subfamily. Homodimer. It depends on Mg(2+) as a cofactor. Requires Mn(2+) as cofactor. Thiamine diphosphate serves as cofactor.

It carries out the reaction isochorismate + 2-oxoglutarate + H(+) = 5-enolpyruvoyl-6-hydroxy-2-succinyl-cyclohex-3-ene-1-carboxylate + CO2. It functions in the pathway quinol/quinone metabolism; 1,4-dihydroxy-2-naphthoate biosynthesis; 1,4-dihydroxy-2-naphthoate from chorismate: step 2/7. Its pathway is quinol/quinone metabolism; menaquinone biosynthesis. Catalyzes the thiamine diphosphate-dependent decarboxylation of 2-oxoglutarate and the subsequent addition of the resulting succinic semialdehyde-thiamine pyrophosphate anion to isochorismate to yield 2-succinyl-5-enolpyruvyl-6-hydroxy-3-cyclohexene-1-carboxylate (SEPHCHC). The polypeptide is 2-succinyl-5-enolpyruvyl-6-hydroxy-3-cyclohexene-1-carboxylate synthase (Shigella sonnei (strain Ss046)).